We begin with the raw amino-acid sequence, 277 residues long: 2,3,4,5-tetrahydropyridine-2,6-dicarboxylate N-succinyltransferase (277 aa).

Substrate is bound by residues arginine 106 and aspartate 143.

Belongs to the transferase hexapeptide repeat family. As to quaternary structure, homotrimer.

The protein localises to the cytoplasm. The enzyme catalyses (S)-2,3,4,5-tetrahydrodipicolinate + succinyl-CoA + H2O = (S)-2-succinylamino-6-oxoheptanedioate + CoA. Its pathway is amino-acid biosynthesis; L-lysine biosynthesis via DAP pathway; LL-2,6-diaminopimelate from (S)-tetrahydrodipicolinate (succinylase route): step 1/3. The chain is 2,3,4,5-tetrahydropyridine-2,6-dicarboxylate N-succinyltransferase from Xylella fastidiosa (strain 9a5c).